We begin with the raw amino-acid sequence, 545 residues long: Chaperonin GroEL (545 aa).

ATP is bound by residues 30–33, K51, 87–91, G415, and D495; these read TLGP and DGTTT.

Belongs to the chaperonin (HSP60) family. As to quaternary structure, forms a cylinder of 14 subunits composed of two heptameric rings stacked back-to-back. Interacts with the co-chaperonin GroES.

It is found in the cytoplasm. It carries out the reaction ATP + H2O + a folded polypeptide = ADP + phosphate + an unfolded polypeptide.. Functionally, together with its co-chaperonin GroES, plays an essential role in assisting protein folding. The GroEL-GroES system forms a nano-cage that allows encapsulation of the non-native substrate proteins and provides a physical environment optimized to promote and accelerate protein folding. This is Chaperonin GroEL from Shewanella putrefaciens (strain CN-32 / ATCC BAA-453).